Here is a 227-residue protein sequence, read N- to C-terminus: Large ribosomal subunit protein uL3 (227 aa).

Residues 146-167 form a disordered region; it reads RGPMAHGSKFHRHQGSNGACSS.

Belongs to the universal ribosomal protein uL3 family. As to quaternary structure, part of the 50S ribosomal subunit. Forms a cluster with proteins L14 and L19.

One of the primary rRNA binding proteins, it binds directly near the 3'-end of the 23S rRNA, where it nucleates assembly of the 50S subunit. This is Large ribosomal subunit protein uL3 from Agathobacter rectalis (strain ATCC 33656 / DSM 3377 / JCM 17463 / KCTC 5835 / VPI 0990) (Eubacterium rectale).